Here is a 302-residue protein sequence, read N- to C-terminus: Sulfate adenylyltransferase subunit 2 (302 aa).

This sequence belongs to the PAPS reductase family. CysD subfamily. Heterodimer composed of CysD, the smaller subunit, and CysN.

The catalysed reaction is sulfate + ATP + H(+) = adenosine 5'-phosphosulfate + diphosphate. The protein operates within sulfur metabolism; hydrogen sulfide biosynthesis; sulfite from sulfate: step 1/3. In terms of biological role, with CysN forms the ATP sulfurylase (ATPS) that catalyzes the adenylation of sulfate producing adenosine 5'-phosphosulfate (APS) and diphosphate, the first enzymatic step in sulfur assimilation pathway. APS synthesis involves the formation of a high-energy phosphoric-sulfuric acid anhydride bond driven by GTP hydrolysis by CysN coupled to ATP hydrolysis by CysD. The chain is Sulfate adenylyltransferase subunit 2 from Buchnera aphidicola subsp. Acyrthosiphon pisum (strain 5A).